We begin with the raw amino-acid sequence, 818 residues long: Adhesion G protein-coupled receptor E5 (818 aa).

An N-terminal signal peptide occupies residues 1-23; that stretch reads MRGVRCPGLLVVCILLSLSGAGT. Topologically, residues 24-533 are extracellular; it reads QKAESKNCAK…VQDPRLELIT (510 aa). The 42-residue stretch at 27–68 folds into the EGF-like 1 domain; it reads ESKNCAKWCPINSKCVSNRSCVCKPGFSSEKELITNPAESCE. Disulfide bonds link Cys-31/Cys-41, Cys-35/Cys-47, Cys-49/Cys-67, Cys-73/Cys-86, Cys-80/Cys-95, Cys-97/Cys-118, Cys-169/Cys-182, Cys-176/Cys-191, Cys-193/Cys-212, Cys-218/Cys-231, Cys-225/Cys-240, and Cys-242/Cys-260. Residue Asn-44 is glycosylated (N-linked (GlcNAc...) asparagine). Residues 69-119 enclose the EGF-like 2; calcium-binding domain; sequence DINECLLPGFSCGDFAMCKNSEGSYTCVCNLGYKLLSGAESFVNESENTCQ. Asn-112 carries an N-linked (GlcNAc...) asparagine glycan. An EGF-like 3; calcium-binding domain is found at 165–213; that stretch reads DVNECISGQNHCHQSTHCINKLGGYSCICRQGWKPVPGSPNGPVSTVCE. The EGF-like 4; calcium-binding domain maps to 214-261; that stretch reads DVDECSSGQHQCHNSTVCKNTVGSYKCHCRPGWKPTSGSLRGPDTICQ. Asn-227 is a glycosylation site (N-linked (GlcNAc...) asparagine). Asn-299 and Asn-395 each carry an N-linked (GlcNAc...) asparagine glycan. The 179-residue stretch at 347–525 folds into the GAIN-B domain; that stretch reads PFTYTSPSNT…AILMAQYHVQ (179 aa). Residue Ser-425 is modified to Phosphoserine. Residues Asn-461 and Asn-502 are each glycosylated (N-linked (GlcNAc...) asparagine). 2 disulfide bridges follow: Cys-482–Cys-507 and Cys-499–Cys-509. Positions 482-525 are GPS; it reads CAFWKAHNGNGYWDTDGCSMNGTGFCHCNHLTSFAILMAQYHVQ. The helical transmembrane segment at 534 to 554 threads the bilayer; it reads KVGLLLSLICLLLCILTFLLV. The Cytoplasmic segment spans residues 555-562; sequence KPIQSSRT. A helical membrane pass occupies residues 563–583; the sequence is MVHLHLCICLFLGSIIFLVGV. The Extracellular segment spans residues 584–602; sequence ENEGGEVGLRCRLVAMMLH. A helical transmembrane segment spans residues 603–623; that stretch reads FCFLAAFCWMALEGVELYFLV. Topologically, residues 624–637 are cytoplasmic; it reads VRVFQGQGLSTWQR. Residues 638 to 658 form a helical membrane-spanning segment; sequence CLIGYGVPLLIVAISMAVVKM. Residues 659-679 are Extracellular-facing; the sequence is DGYGHATYCWLDFRKQGFLWS. The chain crosses the membrane as a helical span at residues 680–700; the sequence is FSGPVAFIIFCNAAIFVITVW. The Cytoplasmic segment spans residues 701–723; it reads KLTKKFSEINPNMKKLRKARVLT. A helical membrane pass occupies residues 724–744; it reads ITAIAQLLVLGCTWGFGLFLF. At 745-752 the chain is on the extracellular side; sequence NPHSTWLS. A helical membrane pass occupies residues 753–773; the sequence is YIFTLLNCLQGLFLYVMLCLL. Residues 774-818 lie on the Cytoplasmic side of the membrane; the sequence is NKKVREEYWKWACMVTGSKYTEFNSSTTGTGTSQTRALRSSESGM. Ser-798 is subject to Phosphoserine. The segment covering 799–808 has biased composition (low complexity); it reads STTGTGTSQT. The interval 799-818 is disordered; the sequence is STTGTGTSQTRALRSSESGM. Thr-808 bears the Phosphothreonine mark. Positions 809 to 818 are enriched in polar residues; sequence RALRSSESGM. Residues Ser-814 and Ser-816 each carry the phosphoserine modification.

This sequence belongs to the G-protein coupled receptor 2 family. LN-TM7 subfamily. In terms of assembly, forms a heterodimer, consisting of a large extracellular region (alpha subunit) non-covalently linked to a seven-transmembrane moiety (beta subunit). Interacts with complement decay-accelerating factor (DAF). The largest isoform (isoform 1) do not interact with DAF. Also interacts with chondroitin sulfate. Proteolytically cleaved into 2 subunits, an extracellular alpha subunit and a seven-transmembrane subunit. Although predominantly expressed by cells of the immune system, expressed ubiquitously with particularly high levels of expression in the lung and the thymus gland. In the spleen, expression is detected on most myeloid cells and variable portions of T-cells, B-cells and NK cells. In the bone marrow, expressed in nearly all myeloid cells, whereas little if any expression is found on erythroid cells.

It localises to the cell membrane. Its subcellular location is the secreted. The protein localises to the extracellular space. Its function is as follows. Receptor potentially involved in both adhesion and signaling processes early after leukocyte activation. Plays an essential role in leukocyte migration. This is Adhesion G protein-coupled receptor E5 from Mus musculus (Mouse).